We begin with the raw amino-acid sequence, 296 residues long: 4-hydroxybenzoate octaprenyltransferase (296 aa).

Transmembrane regions (helical) follow at residues 23–43, 46–66, 99–119, 141–161, 163–183, 211–231, 237–257, and 265–285; these read IGIL…SPGW, GLVL…GCVM, LALA…PLVV, IPQA…FAAI, GQLP…AIAY, DVFA…WVGV, WPYF…YALI, and CFKA…GVLA.

This sequence belongs to the UbiA prenyltransferase family. It depends on Mg(2+) as a cofactor.

The protein resides in the cell inner membrane. The enzyme catalyses all-trans-octaprenyl diphosphate + 4-hydroxybenzoate = 4-hydroxy-3-(all-trans-octaprenyl)benzoate + diphosphate. It participates in cofactor biosynthesis; ubiquinone biosynthesis. Functionally, catalyzes the prenylation of para-hydroxybenzoate (PHB) with an all-trans polyprenyl group. Mediates the second step in the final reaction sequence of ubiquinone-8 (UQ-8) biosynthesis, which is the condensation of the polyisoprenoid side chain with PHB, generating the first membrane-bound Q intermediate 3-octaprenyl-4-hydroxybenzoate. The chain is 4-hydroxybenzoate octaprenyltransferase from Methylobacillus flagellatus (strain ATCC 51484 / DSM 6875 / VKM B-1610 / KT).